The following is a 131-amino-acid chain: Large ribosomal subunit protein bL12 (131 aa).

This sequence belongs to the bacterial ribosomal protein bL12 family. As to quaternary structure, homodimer. Part of the ribosomal stalk of the 50S ribosomal subunit. Forms a multimeric L10(L12)X complex, where L10 forms an elongated spine to which 2 to 4 L12 dimers bind in a sequential fashion. Binds GTP-bound translation factors.

Forms part of the ribosomal stalk which helps the ribosome interact with GTP-bound translation factors. Is thus essential for accurate translation. In Prochlorococcus marinus (strain MIT 9313), this protein is Large ribosomal subunit protein bL12.